We begin with the raw amino-acid sequence, 244 residues long: Orotidine 5'-phosphate decarboxylase (244 aa).

Substrate is bound by residues Asp-10, Lys-32, Asp-59–Thr-68, Thr-122, Arg-184, Gln-193, Gly-213, and Arg-214. The Proton donor role is filled by Lys-61.

This sequence belongs to the OMP decarboxylase family. Type 1 subfamily. As to quaternary structure, homodimer.

The enzyme catalyses orotidine 5'-phosphate + H(+) = UMP + CO2. It functions in the pathway pyrimidine metabolism; UMP biosynthesis via de novo pathway; UMP from orotate: step 2/2. In terms of biological role, catalyzes the decarboxylation of orotidine 5'-monophosphate (OMP) to uridine 5'-monophosphate (UMP). This Geobacillus kaustophilus (strain HTA426) protein is Orotidine 5'-phosphate decarboxylase.